Here is a 170-residue protein sequence, read N- to C-terminus: Large ribosomal subunit protein uL15 (170 aa).

Positions 1–12 are enriched in basic and acidic residues; that stretch reads MKLHDLRPAEGA. A disordered region spans residues 1-52; it reads MKLHDLRPAEGAHRKRKRIGRGHGSGKGKTGGKGMMGQKARSGPGPYRTFEG. Basic residues predominate over residues 13 to 26; that stretch reads HRKRKRIGRGHGSG.

It belongs to the universal ribosomal protein uL15 family. Part of the 50S ribosomal subunit.

Binds to the 23S rRNA. This chain is Large ribosomal subunit protein uL15, found in Chloroflexus aurantiacus (strain ATCC 29366 / DSM 635 / J-10-fl).